Here is a 378-residue protein sequence, read N- to C-terminus: Pyrimidine monooxygenase RutA (378 aa).

FMN-binding positions include 65–66, asparagine 131, glutamate 140, 156–157, and serine 206; these read IK and RY.

Belongs to the NtaA/SnaA/DszA monooxygenase family. RutA subfamily.

It catalyses the reaction uracil + FMNH2 + NADH + O2 = (Z)-3-ureidoacrylate + FMN + NAD(+) + H2O + H(+). The enzyme catalyses thymine + FMNH2 + NADH + O2 = (Z)-2-methylureidoacrylate + FMN + NAD(+) + H2O + H(+). Functionally, catalyzes the pyrimidine ring opening between N-3 and C-4 by an unusual flavin hydroperoxide-catalyzed mechanism, adding oxygen atoms in the process to yield ureidoacrylate peracid, that immediately reacts with FMN forming ureidoacrylate and FMN-N(5)-oxide. The FMN-N(5)-oxide reacts spontaneously with NADH to produce FMN. Requires the flavin reductase RutF to regenerate FMN in vivo. The chain is Pyrimidine monooxygenase RutA from Cronobacter turicensis (strain DSM 18703 / CCUG 55852 / LMG 23827 / z3032).